The chain runs to 443 residues: Carboxypeptidase M (443 aa).

An N-terminal signal peptide occupies residues 1–17 (MDRARLWLGLLLPVVAA). A Peptidase M14 domain is found at 21–311 (RYHHQEGMEA…ASLIEYIKQV (291 aa)). The N-linked (GlcNAc...) asparagine glycan is linked to Asn38. Zn(2+) is bound by residues His83 and Glu86. 3 disulfides stabilise this stretch: Cys138–Cys285, Cys242–Cys284, and Cys341–Cys410. N-linked (GlcNAc...) asparagine glycosylation is present at Asn164. Residue His190 coordinates Zn(2+). Residue Glu281 is the Proton donor/acceptor of the active site. A glycan (N-linked (GlcNAc...) asparagine) is linked at Asn363. Residue Ser423 is the site of GPI-anchor amidated serine attachment. A propeptide spans 424–443 (AATKPSLGVFFMTLLYVFFK) (removed in mature form).

It belongs to the peptidase M14 family. Requires Zn(2+) as cofactor.

It localises to the cell membrane. The catalysed reaction is Cleavage of C-terminal arginine or lysine residues from polypeptides.. Specifically removes C-terminal basic residues (Arg or Lys) from peptides and proteins. It is believed to play important roles in the control of peptide hormone and growth factor activity at the cell surface, and in the membrane-localized degradation of extracellular proteins. This is Carboxypeptidase M (Cpm) from Mus musculus (Mouse).